The sequence spans 357 residues: Peptide chain release factor 1 (357 aa).

Position 234 is an N5-methylglutamine (Gln234). A disordered region spans residues 283–313 (SKKQEQRSSNRKQQVGSGDRSERIRTYNFPQ).

Belongs to the prokaryotic/mitochondrial release factor family. Post-translationally, methylated by PrmC. Methylation increases the termination efficiency of RF1.

The protein localises to the cytoplasm. Peptide chain release factor 1 directs the termination of translation in response to the peptide chain termination codons UAG and UAA. The polypeptide is Peptide chain release factor 1 (Borrelia garinii subsp. bavariensis (strain ATCC BAA-2496 / DSM 23469 / PBi) (Borreliella bavariensis)).